A 598-amino-acid chain; its full sequence is F-box/WD repeat-containing protein 8 (598 aa).

Met-1 bears the N-acetylmethionine mark. Positions Leu-17–Gly-93 are disordered. Positions Pro-29–Glu-40 are enriched in basic and acidic residues. Positions Glu-61–Ala-71 are enriched in low complexity. Residues Ser-83 and Ser-85 each carry the phosphoserine modification. The 47-residue stretch at Pro-113–Leu-159 folds into the F-box domain. 8 WD repeats span residues Ala-201 to Glu-250, Gln-259 to Asp-299, Ala-300 to Glu-340, Val-341 to Ala-383, His-384 to Gly-429, Asn-430 to Gln-475, Leu-476 to Ser-513, and Gly-514 to Phe-561.

In terms of assembly, component of the Cul7-RING(FBXW8) complex consisting of CUL7, RBX1, SKP1 and FBXW8; within the complex interacts with CUL7 and SKP1. Interacts with GLMN isoform 1. Interacts with OBSL1, CUL1, CUL2, CCT6B, PFDN5, CCT2, CCT3, CCT6A, CCT7, VBP1, CCDC8, ARF1, TRIP13, PDCD5 and GORASP1. Interacts with MAP4K1/HPK1 (when autophosphorylated). Associated component of the 3M complex. Interacts with POUF51 (when phosphorylated on 'Ser-355'). Phosphorylation at Ser-85 by mTORC2 promotes FBXW8 stabilization, allowing its translocation to the cytosol in response to insulin.

It is found in the cytoplasm. The protein resides in the perinuclear region. Its subcellular location is the golgi apparatus. It functions in the pathway protein modification; protein ubiquitination. Substrate-recognition component of the Cul7-RING(FBXW8) ubiquitin ligase complex, which mediates the ubiquitination and subsequent proteasomal degradation of target proteins. The Cul7-RING(FBXW8) complex mediates ubiquitination and consequent degradation of GORASP1, acting as a component of the ubiquitin ligase pathway that regulates Golgi morphogenesis and dendrite patterning in brain. Mediates ubiquitination and degradation of IRS1 in a mTOR-dependent manner: the Cul7-RING(FBXW8) complex recognizes and binds IRS1 previously phosphorylated by S6 kinase (RPS6KB1 or RPS6KB2). The Cul7-RING(FBXW8) complex also mediates ubiquitination of MAP4K1/HPK1: recognizes and binds autophosphorylated MAP4K1/HPK1, leading to its degradation, thereby affecting cell proliferation and differentiation. The Cul7-RING(FBXW8) complex also mediates ubiquitination of phosphorylated cyclin-D1 (CCND1). The Cul7-RING(FBXW8) complex is however not a major regulator of CCND1 stability during the G1/S transition. Associated component of the 3M complex, suggesting that it mediates some of 3M complex functions. The protein is F-box/WD repeat-containing protein 8 of Homo sapiens (Human).